The chain runs to 945 residues: Soluble guanylate cyclase gcy-33 (945 aa).

H104 contributes to the heme binding site. Residues 388–413 (SEVLTEMTREISEAKKTARTLLTQMM) are a coiled coil. Positions 437–567 (SIGFIRVCDF…DTVNTASRME (131 aa)) constitute a Guanylate cyclase domain. Disordered regions lie at residues 639–679 (KEAE…LSGS) and 706–930 (QDEN…KCED). The span at 661–679 (SLGESIDSSSSRRGSLSGS) shows a compositional bias: low complexity. The segment covering 711 to 720 (RPPTWSASHS) has biased composition (polar residues). The span at 721 to 731 (QDIRKPRKTES) shows a compositional bias: basic and acidic residues. Over residues 732-744 (KITLNSRLSSSDL) the composition is skewed to polar residues. Basic and acidic residues-rich tracts occupy residues 750-759 (ETSKDSDGET) and 766-804 (ELKE…DHVS). Residues 763–802 (TSSELKEVNRIREEALAQEKEEERTTKEENQKIEEVGEDH) adopt a coiled-coil conformation. Over residues 817–828 (GDNNISFSQMPS) the composition is skewed to polar residues. The span at 851 to 861 (ISKKKLEKEDS) shows a compositional bias: basic and acidic residues. Positions 862-884 (NSSMSSLDERTTVSAKPTTTRRL) are enriched in polar residues. Basic and acidic residues predominate over residues 886 to 896 (NQKDLEKEKKR). Residues 898-911 (SMAGSSVTSSSAHS) show a composition bias toward low complexity. Residues 916 to 930 (SKKDTRDKSRCKCED) are compositionally biased toward basic and acidic residues.

The protein belongs to the adenylyl cyclase class-4/guanylyl cyclase family. As to quaternary structure, heterodimer; with other soluble guanylate cyclases. Heme serves as cofactor. In terms of tissue distribution, expressed in BAG sensory neuron.

Its subcellular location is the cytoplasm. The catalysed reaction is GTP = 3',5'-cyclic GMP + diphosphate. Its activity is regulated as follows. May be regulated by molecular oxygen. Probably not activated by nitric oxide (NO). In terms of biological role, synthesizes cyclic GMP (cGMP) from GTP. May be involved in sensitivity to quinine by regulating egl-4 activity through the production of cGMP. The chain is Soluble guanylate cyclase gcy-33 (gcy-33) from Caenorhabditis elegans.